The following is a 651-amino-acid chain: Intraflagellar transport protein 70A (651 aa).

TPR repeat units lie at residues aspartate 8 to serine 41, arginine 42 to valine 75, proline 140 to lysine 173, aspartate 175 to glutamate 207, leucine 372 to threonine 405, isoleucine 410 to histidine 443, and isoleucine 445 to asparagine 478. A coiled-coil region spans residues tyrosine 494–asparagine 521. The TPR 8 repeat unit spans residues cysteine 530 to lysine 563.

The protein belongs to the TTC30/dfy-1/fleer family.

The protein resides in the cell projection. The protein localises to the cilium. Required for polyglutamylation of axonemal tubulin. Plays a role in anterograde intraflagellar transport (IFT), the process by which cilia precursors are transported from the base of the cilium to the site of their incorporation at the tip. In Xenopus tropicalis (Western clawed frog), this protein is Intraflagellar transport protein 70A (ift70a).